The chain runs to 153 residues: Ribosome maturation factor RimP (153 aa).

It belongs to the RimP family.

Its subcellular location is the cytoplasm. In terms of biological role, required for maturation of 30S ribosomal subunits. This is Ribosome maturation factor RimP from Acidithiobacillus ferrooxidans (strain ATCC 53993 / BNL-5-31) (Leptospirillum ferrooxidans (ATCC 53993)).